A 431-amino-acid chain; its full sequence is Keratin, type I cytoskeletal 40 (431 aa).

A head region spans residues 1–89 (MASDCSPTGC…CEDGVFNSNE (89 aa)). Positions 89-400 (EKETMQFLND…GLLDSEDSRL (312 aa)) constitute an IF rod domain. The coil 1A stretch occupies residues 90–124 (KETMQFLNDRLASYLEKVRGLEELNAELECRIREQ). Residues 125-135 (CEEDVPLVCPD) form a linker 1 region. Residues 136-236 (YQCYFDTIED…HEEEVNVLRG (101 aa)) form a coil 1B region. Positions 237–252 (QLGDRLSVELDTAPTT) are linker 12. Residues 253–396 (DLNRVLDEMR…NTYQGLLDSE (144 aa)) form a coil 2 region. The segment at 397–431 (DSRLPCNPCSATSMSNDTCEPCSAYVICTVENSCP) is tail.

It belongs to the intermediate filament family. Heterotetramer of two type I and two type II keratins.

Its function is as follows. May play a role in late hair differentiation. The sequence is that of Keratin, type I cytoskeletal 40 (KRT40) from Bos taurus (Bovine).